The primary structure comprises 314 residues: Deoxymugineic acid synthase 1-A (314 aa).

Positions 1–21 (MGAGDKTAAGMPRIGMGTAVQ) are disordered. Asp-44 is a binding site for NADP(+). Tyr-49 (proton donor) is an active-site residue. A substrate-binding site is contributed by His-112. NADP(+) is bound by residues 158–159 (AN), Gln-180, 258–266 (FDEARMREN), and 273–281 (ELTEEEHRR).

It belongs to the aldo/keto reductase family. In terms of tissue distribution, mostly expressed in root tissues, observed in mesocotyl and embryonic roots, seedling roots, crown and seedling leafes, mature bracts, anthers, pistil, caryopsis and embryos.

The catalysed reaction is 2'-deoxymugineate + NAD(+) = 3''-deamino-3''-oxonicotianamine + NADH + H(+). It catalyses the reaction 2'-deoxymugineate + NADP(+) = 3''-deamino-3''-oxonicotianamine + NADPH + H(+). Its pathway is siderophore biosynthesis. Functionally, catalyzes the reduction of a 3''-keto intermediate during the biosynthesis of 2'-deoxymugineic acid (DMA) from L-Met. Involved in the formation of phytosiderophores (MAs) belonging to the mugineic acid family and required to acquire iron. The polypeptide is Deoxymugineic acid synthase 1-A (Triticum aestivum (Wheat)).